We begin with the raw amino-acid sequence, 558 residues long: Solute carrier family 22 member 6-A (558 aa).

Topologically, residues 1 to 15 (MSFAELLERTGGMGR) are cytoplasmic. The helical transmembrane segment at 16-36 (FQITQVALMCFPILLMASHNL) threads the bilayer. Residues 37-140 (LQNFSAAIPD…LVCGHKNRRQ (104 aa)) lie on the Extracellular side of the membrane. The helical transmembrane segment at 141–161 (LAQSVYMGGVLVGAIILGGLS) threads the bilayer. Residues 162-167 (DRYGRR) are Cytoplasmic-facing. The chain crosses the membrane as a helical span at residues 168 to 188 (ALLIWSYFQMAVSGLCSAFSP). The Extracellular portion of the chain corresponds to 189–197 (NYLSYCIFR). A helical membrane pass occupies residues 198–218 (FLTGMALSGIGLNTTALIVEW). The Cytoplasmic portion of the chain corresponds to 219–225 (VPTRVRT). A helical membrane pass occupies residues 226 to 246 (ITGTLAGFSYTVGQLLLAGLA). Topologically, residues 247–253 (YAMRDWR) are extracellular. A helical transmembrane segment spans residues 254–274 (WLQLCVSLPFFIFFLYSWWFP). Residues 275–342 (ESARWLVLSG…DLIRTSTIRR (68 aa)) lie on the Cytoplasmic side of the membrane. Residues 343–363 (ISCALSLVWFSTSFAYYGLAM) form a helical membrane-spanning segment. At 364–369 (DLQNFN) the chain is on the extracellular side. A helical membrane pass occupies residues 370–390 (VSIYLIQVIFGAVDFPAKIFS). Residues 391–400 (TTAMIYVGRK) are Cytoplasmic-facing. The chain crosses the membrane as a helical span at residues 401–421 (FTQLMSLILGGVVILANSFVP). At 422–428 (HEMQTVR) the chain is on the extracellular side. Residues 429 to 449 (TGMAVFGKGCLAASFSCVFLY) form a helical membrane-spanning segment. Residues 450–462 (TTELYPTVIRQSG) are Cytoplasmic-facing. The helical transmembrane segment at 463–483 (LGLCSTMARIGGIVAPLVKIL) threads the bilayer. Over 484–488 (GEYYP) the chain is Extracellular. A helical membrane pass occupies residues 489–509 (FLPLVIYGGAPIISGLCVFFL). Topologically, residues 510–558 (PETVNKPLPDTIEEVEKRIKAPKKENEMNEIVSLKKKEGMKENPVNDVL) are cytoplasmic. Basic and acidic residues predominate over residues 539 to 550 (EIVSLKKKEGMK). A disordered region spans residues 539 to 558 (EIVSLKKKEGMKENPVNDVL).

Belongs to the major facilitator (TC 2.A.1) superfamily. Organic cation transporter (TC 2.A.1.19) family. Post-translationally, glycosylated. Glycosylation is necessary for proper targeting of the transporter to the plasma membrane.

The protein localises to the cell membrane. Its subcellular location is the basolateral cell membrane. It is found in the basal cell membrane. Functionally, involved in the renal elimination of endogenous and exogenous organic anions. Mediates the sodium-independent uptake of p-aminohippurate (PAH), 2,3-dimercapto-1-propanesulfonic acid (DMPS), cidofovir, adefovir, 9-(2-phosphonylmethoxyethyl) guanine (PMEG), 9-(2-phosphonylmethoxyethyl) diaminopurine (PMEDAP), ochratoxin (OTA), acyclovir (ACV), 3'-azido-3-'deoxythymidine (AZT), cimetidine (CMD), 2,4-dichloro-phenoxyacetate (2,4-D), hippurate (HA), indoleacetate (IA), indoxyl sulfate (IS) and 3-carboxy-4-methyl-5-propyl-2-furanpropionate (CMPF) and edaravone sulfate. PAH uptake is inhibited by p-chloromercuribenzenesulphonate (PCMBS), diethyl pyrocarbonate (DEPC), indomethacin, sulindac, diclofenac, carprofen, okadaic acid, benzothiazolylcysteine (BTC), S-chlorotrifluoroethylcysteine (CTFC), cysteine S-conjugates S-dichlorovinylcysteine (DCVC), furosemide, steviol, phorbol 12-myristate 13-acetate (PMA), calcium ionophore A23187, benzylpenicillin, bumetamide, losartan, probenecid, phenol red, urate, glutarate and alpha-ketoglutarate. This is Solute carrier family 22 member 6-A (slc22a6-a) from Xenopus laevis (African clawed frog).